We begin with the raw amino-acid sequence, 194 residues long: Holliday junction branch migration complex subunit RuvA (194 aa).

The tract at residues M1–A64 is domain I. Positions T65–Q143 are domain II. The tract at residues V144–S149 is flexible linker. A domain III region spans residues S149–K194.

This sequence belongs to the RuvA family. As to quaternary structure, homotetramer. Forms an RuvA(8)-RuvB(12)-Holliday junction (HJ) complex. HJ DNA is sandwiched between 2 RuvA tetramers; dsDNA enters through RuvA and exits via RuvB. An RuvB hexamer assembles on each DNA strand where it exits the tetramer. Each RuvB hexamer is contacted by two RuvA subunits (via domain III) on 2 adjacent RuvB subunits; this complex drives branch migration. In the full resolvosome a probable DNA-RuvA(4)-RuvB(12)-RuvC(2) complex forms which resolves the HJ.

The protein localises to the cytoplasm. Functionally, the RuvA-RuvB-RuvC complex processes Holliday junction (HJ) DNA during genetic recombination and DNA repair, while the RuvA-RuvB complex plays an important role in the rescue of blocked DNA replication forks via replication fork reversal (RFR). RuvA specifically binds to HJ cruciform DNA, conferring on it an open structure. The RuvB hexamer acts as an ATP-dependent pump, pulling dsDNA into and through the RuvAB complex. HJ branch migration allows RuvC to scan DNA until it finds its consensus sequence, where it cleaves and resolves the cruciform DNA. This is Holliday junction branch migration complex subunit RuvA from Dehalococcoides mccartyi (strain CBDB1).